A 104-amino-acid polypeptide reads, in one-letter code: Large ribosomal subunit protein uL24 (104 aa).

It belongs to the universal ribosomal protein uL24 family. In terms of assembly, part of the 50S ribosomal subunit.

One of two assembly initiator proteins, it binds directly to the 5'-end of the 23S rRNA, where it nucleates assembly of the 50S subunit. In terms of biological role, one of the proteins that surrounds the polypeptide exit tunnel on the outside of the subunit. This is Large ribosomal subunit protein uL24 from Buchnera aphidicola subsp. Acyrthosiphon pisum (strain 5A).